Here is a 370-residue protein sequence, read N- to C-terminus: Serine/threonine-protein kinase SAPK5 (370 aa).

Residues 4–260 (YEPVREIGAG…MGEIKSHPWF (257 aa)) form the Protein kinase domain. Residues 10 to 18 (IGAGNFGVA) and Lys-33 contribute to the ATP site. Residue Asp-123 is the Proton acceptor of the active site. Residues 312–370 (EAQTVPKPDKPVSGYGWGTDDDDDDQQPAEEEDEEDDYDRTVREVHASVDLDMSNLQIS) form a disordered region. A compositionally biased stretch (acidic residues) spans 330 to 349 (TDDDDDDQQPAEEEDEEDDY). Basic and acidic residues predominate over residues 350-360 (DRTVREVHASV).

The protein belongs to the protein kinase superfamily. Ser/Thr protein kinase family. May be phosphorylated. Expressed in leaf blades, leaf sheaths and roots. Expressed in shoots and roots of young seedlings.

Its subcellular location is the cytoplasm. The protein localises to the nucleus. The catalysed reaction is L-seryl-[protein] + ATP = O-phospho-L-seryl-[protein] + ADP + H(+). The enzyme catalyses L-threonyl-[protein] + ATP = O-phospho-L-threonyl-[protein] + ADP + H(+). With respect to regulation, activated by hyperosmotic stress. Functionally, may play a role in signal transduction of hyperosmotic response. The polypeptide is Serine/threonine-protein kinase SAPK5 (SAPK5) (Oryza sativa subsp. japonica (Rice)).